We begin with the raw amino-acid sequence, 269 residues long: Probable cysteine protease avirulence protein AvrPpiC2 (269 aa).

Positions 1 to 39 (MTIVSGHIGKHPSLTTVQAGSSASVENQMPDPAQFSDGR) are disordered. Polar residues predominate over residues 13-27 (SLTTVQAGSSASVEN). Active-site residues include Cys72, His213, and Asp230.

Belongs to the peptidase C58 family.

Its function is as follows. Potential cysteine protease. Avirulence protein, which may be essential during infection of plant cells from Pea and some Arabidopsis thaliana cultivars. May act by affecting the plant defense system. In plants lacking appropriate resistance (R) gene, it probably impairs the plant defense system and leads to the bacteria multiplication. In contrast, in plants containing the appropriate R protein, it is unable to induce disease symptoms, explaining its avirulence name. In Pseudomonas syringae pv. pisi, this protein is Probable cysteine protease avirulence protein AvrPpiC2 (avrPpiC2).